The sequence spans 775 residues: Tumor necrosis factor alpha-induced protein 3 (775 aa).

Ala-2 is subject to N-acetylalanine. Positions 58-300 are TRAF-binding; sequence PQFREIIHKA…LTDPENEMKE (243 aa). The OTU domain occupies 92–263; sequence LVALKTNGDG…SQHFVPLVTL (172 aa). The active site involves Asp-100. The Nucleophile role is filled by Cys-103. Interaction with ubiquitin regions lie at residues 157–159, 190–192, and 224–227; these read LCY, SLE, and FAPL. Catalysis depends on His-256, which acts as the Proton acceptor. An interaction with TNIP1 region spans residues 369–775; it reads AQNPLEPSTP…ECYQFKQMYG (407 aa). The A20-type 1 zinc-finger motif lies at 381-416; sequence SLMDIKCETPNCPFFMSVNTQPLCHECSERRQKNQS. The interaction with RIPK1 stretch occupies residues 386 to 445; the sequence is KCETPNCPFFMSVNTQPLCHECSERRQKNQSKLPKLNSKLGPEGLPGVGLGSSNWSPEET. The Zn(2+) site is built by Cys-387, Cys-392, Cys-404, and Cys-407. The disordered stretch occupies residues 415–455; it reads QSKLPKLNSKLGPEGLPGVGLGSSNWSPEETAGGPHSAPPT. The residue at position 451 (Ser-451) is a Phosphoserine. 2 consecutive A20-type zinc fingers follow at residues 464–499 and 500–533; these read ETTAMKCRSPGCPFTLNVQHNGFCERCHARQINASH and TADPGKCQACLQDVTRTFNGICSTCFKRTTAEPS. Cys-470, Cys-475, Cys-487, Cys-490, Cys-506, Cys-509, Cys-521, and Cys-524 together coordinate Zn(2+). Residues 567–580 show a composition bias toward polar residues; it reads TGNVSPSGCLSQAA. The tract at residues 567-590 is disordered; sequence TGNVSPSGCLSQAARTPGDRAGTS. A20-type zinc fingers lie at residues 586–621, 636–671, 695–730, and 741–775; these read RAGTSKCRKAGCMYFGTPENKGFCTLCFIEYRENKQ, FQNNVPCLGRECGTLGSTMFEGYCQKCFIEAQNQRF, VASRLKCARASCKNILACRSEELCMECQHLSQRVGS, and EPPKQRCRAPACDHFGNAKCNGYCNECYQFKQMYG. The required for proteasomal degradation of UBE2N and UBE2D3, TRAF6 deubiquitination, and TAX1BP1 interaction with UBE2N stretch occupies residues 590 to 640; the sequence is SKCRKAGCMYFGTPENKGFCTLCFIEYRENKQSVTASEKAGSPAPRFQNNV. The interval 591–775 is sufficient for inhibitory activity of TNF-induced NF-kappa-B activity; it reads KCRKAGCMYF…ECYQFKQMYG (185 aa). Zn(2+) is bound by residues Cys-592, Cys-597, Cys-609, Cys-612, Cys-642, Cys-647, Cys-659, Cys-662, Cys-701, Cys-706, Cys-718, Cys-721, Cys-747, Cys-752, Cys-764, and Cys-767. A required for lysosomal localization and for TRAF2 lysosomal degradation region spans residues 682-775; the sequence is RSSQHRDMPR…ECYQFKQMYG (94 aa).

This sequence belongs to the peptidase C64 family. As to quaternary structure, homodimer. Interacts with TNIP1, TAX1BP1 and TRAF2. Interacts with RNF11, ITCH and TAX1BP1 only after TNF stimulation; these interaction are transient and they are lost after 1 hour of stimulation with TNF. Interacts with YWHAZ and YWHAH. Interacts with IKBKG; the interaction is induced by TNF stimulation and by polyubiquitin. Interacts with RIPK1. Interacts with UBE2N; the interaction requires TAX1BP1. Interacts with TRAF6. In terms of tissue distribution, found in most tissues during development. Strikingly high levels are found in lymphoid organs, including the thymus, spleen, and gut-associated lymphoid tissue. Constitutively expressed in immature and mature thymocyte subpopulations as well as in resting peripheral T-cells; activation of these leads to down-regulation.

It localises to the cytoplasm. The protein localises to the nucleus. The protein resides in the lysosome. The enzyme catalyses Thiol-dependent hydrolysis of ester, thioester, amide, peptide and isopeptide bonds formed by the C-terminal Gly of ubiquitin (a 76-residue protein attached to proteins as an intracellular targeting signal).. Ubiquitin-editing enzyme that contains both ubiquitin ligase and deubiquitinase activities. Involved in immune and inflammatory responses signaled by cytokines, such as TNF-alpha and IL-1 beta, or pathogens via Toll-like receptors (TLRs) through terminating NF-kappa-B activity. Essential component of a ubiquitin-editing protein complex, comprising also RNF11, ITCH and TAX1BP1, that ensures the transient nature of inflammatory signaling pathways. In cooperation with TAX1BP1 promotes disassembly of E2-E3 ubiquitin protein ligase complexes in IL-1R and TNFR-1 pathways; affected are at least E3 ligases TRAF6, TRAF2 and BIRC2, and E2 ubiquitin-conjugating enzymes UBE2N and UBE2D3. In cooperation with TAX1BP1 promotes ubiquitination of UBE2N and proteasomal degradation of UBE2N and UBE2D3. Upon TNF stimulation, deubiquitinates 'Lys-63'-polyubiquitin chains on RIPK1 and catalyzes the formation of 'Lys-48'-polyubiquitin chains. This leads to RIPK1 proteasomal degradation and consequently termination of the TNF- or LPS-mediated activation of NF-kappa-B. Deubiquitinates TRAF6 probably acting on 'Lys-63'-linked polyubiquitin. Upon T-cell receptor (TCR)-mediated T-cell activation, deubiquitinates 'Lys-63'-polyubiquitin chains on MALT1 thereby mediating disassociation of the CBM (CARD11:BCL10:MALT1) and IKK complexes and preventing sustained IKK activation. Deubiquitinates NEMO/IKBKG; the function is facilitated by TNIP1 and leads to inhibition of NF-kappa-B activation. Upon stimulation by bacterial peptidoglycans, probably deubiquitinates RIPK2. Can also inhibit I-kappa-B-kinase (IKK) through a non-catalytic mechanism which involves polyubiquitin; polyubiquitin promotes association with IKBKG and prevents IKK MAP3K7-mediated phosphorylation. Targets TRAF2 for lysosomal degradation. In vitro able to deubiquitinate 'Lys-11'-, 'Lys-48'- and 'Lys-63' polyubiquitin chains. Inhibitor of programmed cell death. Has a role in the function of the lymphoid system. Required for LPS-induced production of pro-inflammatory cytokines and IFN beta in LPS-tolerized macrophages. This Mus musculus (Mouse) protein is Tumor necrosis factor alpha-induced protein 3 (Tnfaip3).